Here is a 579-residue protein sequence, read N- to C-terminus: Effector protein HopAB3 (579 aa).

Disordered stretches follow at residues 1-140 (MAGI…TGAV), 214-294 (VRQQ…NQVP), and 384-408 (PARA…PDSA). A host recognition; Pto interaction region spans residues 1–336 (MAGINGAGPS…LRAALERHIL (336 aa)). Composition is skewed to low complexity over residues 23 to 39 (ASGG…SSNS), 89 to 101 (RPQE…APQA), 219 to 248 (ASAP…ESSS), 266 to 281 (NQRR…ASQR), and 384 to 402 (PARA…ATVS). Residues 337-579 (HRRPIPMDIA…IAKYAFRIVP (243 aa)) form an E3 ubiquitin-protein ligase region.

This sequence belongs to the HopAB family. Interacts physically with plant cell Pto. Post-translationally, auto-ubiquitinated.

The protein resides in the secreted. Effector protein involved in gene-for-gene resistance in tomato plants. It is recognized by the host Pto resistance protein and elicits Pto and Prf-dependent hypersensitive response (HR) and programmed cell death (PCD), resulting in host immunity. In susceptible plants, acts as a virulence factor by suppressing PCD and HR-based plant immunity. This function requires its E3 ubiquitin ligase activity probably by recruiting E2 enzymes and transferring ubiquitin molecules to cellular proteins involved in regulation of PCD and targeting them for degradation. Enhances the development of disease symptoms and bacterial growth. The chain is Effector protein HopAB3 (hopAB3) from Pseudomonas syringae pv. tomato.